The chain runs to 621 residues: MSHHGPRLSTRSQQIVAGYASVAANFDVEKLHREQGVNIPTSGASINQCPHAAAARAAARMADDLASAARAKKSLDAKGSLAGRPVHHKAATESTKAKHTGFDYEAFYKGELAKKHQDKSYRYFNNINRLARKFPVAHTANPRDEVEVWCSNDYLGMGNNPVVLETMHRTLDKYGHGAGGTRNIAGNGAMHLGLERELRLHRKEAALVFSSCYVANDATLSTLGTKLPGCVIFSDTMNHASMIQGMRHSTPKRVIFKHNDLEDLETKLQQYPKETPKIIAFESVYSMCGSIGPVKEICDLAEQYGAITFLDEVHAVGLYGPRGAGVAEHLDYDAHLAAGSSPDPIPGSVMDRIDIITGTLGKSYGAVGGYIAGSEEFVDMIRSYAPGFIFTTSLPPATVAGARASIVYQSEYLGDRQLKQINVREVKRRLAELDIPVVPGSSHIVPVLVGDAALARAASDKLLSEHDIYVQAINYPTVARGEERLRITVTPRHTMEQMEGLIRSLNQVFEELNINRLSDWKLAGGRAGVGIPGAADDVQPIWTDEQIGLLNGTAPRSLRNAEKSVVDMRAVTIARSRFDVLLGPVYGELQPTEDFDTPAVGATFKAPLVDREVAHDITVSA.

The interval 76–95 is disordered; the sequence is DAKGSLAGRPVHHKAATEST. R122 and S234 together coordinate substrate. Positions 286, 314, and 359 each coordinate pyridoxal 5'-phosphate. K362 is an active-site residue. An N6-(pyridoxal phosphate)lysine modification is found at K362. Pyridoxal 5'-phosphate contacts are provided by T391 and T392. Position 477 (T477) interacts with substrate.

Belongs to the class-II pyridoxal-phosphate-dependent aminotransferase family. Homodimer. It depends on pyridoxal 5'-phosphate as a cofactor.

Its subcellular location is the mitochondrion matrix. It carries out the reaction succinyl-CoA + glycine + H(+) = 5-aminolevulinate + CO2 + CoA. The protein operates within porphyrin-containing compound metabolism; protoporphyrin-IX biosynthesis; 5-aminolevulinate from glycine: step 1/1. Catalyzes the synthesis of 5-aminolevulinate (ALA) from succinyl-CoA and glycine, the first and rate-limiting step in heme biosynthesis. The sequence is that of 5-aminolevulinate synthase, mitochondrial (hem1) from Agaricus bisporus (White button mushroom).